Here is a 218-residue protein sequence, read N- to C-terminus: Orotate phosphoribosyltransferase (218 aa).

Lys26 serves as a coordination point for 5-phospho-alpha-D-ribose 1-diphosphate. Residue 34-35 (FF) participates in orotate binding. 5-phospho-alpha-D-ribose 1-diphosphate is bound by residues 72–73 (YK), Arg99, Lys100, Lys103, His105, and 124–132 (DDVITAGTA). The orotate site is built by Thr128 and Arg156.

It belongs to the purine/pyrimidine phosphoribosyltransferase family. PyrE subfamily. In terms of assembly, homodimer. Mg(2+) serves as cofactor.

It catalyses the reaction orotidine 5'-phosphate + diphosphate = orotate + 5-phospho-alpha-D-ribose 1-diphosphate. The protein operates within pyrimidine metabolism; UMP biosynthesis via de novo pathway; UMP from orotate: step 1/2. Catalyzes the transfer of a ribosyl phosphate group from 5-phosphoribose 1-diphosphate to orotate, leading to the formation of orotidine monophosphate (OMP). This is Orotate phosphoribosyltransferase from Hamiltonella defensa subsp. Acyrthosiphon pisum (strain 5AT).